The sequence spans 830 residues: Kinesin-like protein KIN-14B (830 aa).

Positions 56 to 97 form a coiled coil; the sequence is ENISDDNTESEAKVQKIQDELVSLNAQLKQITLQRREALNNY. Residues 103–425 enclose the Kinesin motor domain; that stretch reads NIRVFCRIRP…LGFATRVRSI (323 aa). 182–189 serves as a coordination point for ATP; that stretch reads GQTGSGKT. Positions 434 to 476 form a coiled coil; sequence EMKARKETLLIDLGQKVNDLEHECEDIRRKIKNLEESMEHLTG.

The protein belongs to the TRAFAC class myosin-kinesin ATPase superfamily. Kinesin family. KIN-14 subfamily.

The polypeptide is Kinesin-like protein KIN-14B (Oryza sativa subsp. japonica (Rice)).